Reading from the N-terminus, the 590-residue chain is Aspartate--tRNA(Asp/Asn) ligase (590 aa).

L-aspartate is bound at residue E182. Positions 206–209 (QLFK) are aspartate. An L-aspartate-binding site is contributed by R228. Residues 228-230 (RDE) and Q237 contribute to the ATP site. L-aspartate is bound at residue H454. An ATP-binding site is contributed by E488. Residue R495 coordinates L-aspartate. ATP is bound at residue 540–543 (GLDR).

This sequence belongs to the class-II aminoacyl-tRNA synthetase family. Type 1 subfamily. In terms of assembly, homodimer.

The protein resides in the cytoplasm. It catalyses the reaction tRNA(Asx) + L-aspartate + ATP = L-aspartyl-tRNA(Asx) + AMP + diphosphate. Functionally, aspartyl-tRNA synthetase with relaxed tRNA specificity since it is able to aspartylate not only its cognate tRNA(Asp) but also tRNA(Asn). Reaction proceeds in two steps: L-aspartate is first activated by ATP to form Asp-AMP and then transferred to the acceptor end of tRNA(Asp/Asn). The chain is Aspartate--tRNA(Asp/Asn) ligase from Halothermothrix orenii (strain H 168 / OCM 544 / DSM 9562).